Reading from the N-terminus, the 471-residue chain is Light-independent protochlorophyllide reductase subunit N (471 aa).

3 residues coordinate [4Fe-4S] cluster: C22, C47, and C107.

This sequence belongs to the BchN/ChlN family. In terms of assembly, protochlorophyllide reductase is composed of three subunits; ChlL, ChlN and ChlB. Forms a heterotetramer of two ChlB and two ChlN subunits. The cofactor is [4Fe-4S] cluster.

It is found in the plastid. The protein resides in the chloroplast. The enzyme catalyses chlorophyllide a + oxidized 2[4Fe-4S]-[ferredoxin] + 2 ADP + 2 phosphate = protochlorophyllide a + reduced 2[4Fe-4S]-[ferredoxin] + 2 ATP + 2 H2O. It participates in porphyrin-containing compound metabolism; chlorophyll biosynthesis (light-independent). In terms of biological role, component of the dark-operative protochlorophyllide reductase (DPOR) that uses Mg-ATP and reduced ferredoxin to reduce ring D of protochlorophyllide (Pchlide) to form chlorophyllide a (Chlide). This reaction is light-independent. The NB-protein (ChlN-ChlB) is the catalytic component of the complex. This chain is Light-independent protochlorophyllide reductase subunit N, found in Anthoceros angustus (Hornwort).